Consider the following 260-residue polypeptide: Snake venom serine protease homolog 2A (260 aa).

Residues 1 to 18 (MVLIRVLANLLILQLSYA) form the signal peptide. A propeptide spanning residues 19 to 24 (QKSSEL) is cleaved from the precursor. The Peptidase S1 domain maps to 25–251 (IIGGDECNIN…HLDWIKSIIA (227 aa)). Cystine bridges form between Cys-31–Cys-165, Cys-52–Cys-68, Cys-100–Cys-258, Cys-144–Cys-212, Cys-176–Cys-191, and Cys-202–Cys-227. N-linked (GlcNAc...) asparagine glycosylation is found at Asn-83, Asn-123, and Asn-124.

This sequence belongs to the peptidase S1 family. Snake venom subfamily. In terms of tissue distribution, expressed by the venom gland.

It localises to the secreted. Snake venom serine protease homolog that may act in the hemostasis system of the prey. The polypeptide is Snake venom serine protease homolog 2A (TLG2A) (Craspedocephalus gramineus (Bamboo pit viper)).